The primary structure comprises 198 residues: Imidazoleglycerol-phosphate dehydratase (198 aa).

The protein belongs to the imidazoleglycerol-phosphate dehydratase family.

It is found in the cytoplasm. The enzyme catalyses D-erythro-1-(imidazol-4-yl)glycerol 3-phosphate = 3-(imidazol-4-yl)-2-oxopropyl phosphate + H2O. It participates in amino-acid biosynthesis; L-histidine biosynthesis; L-histidine from 5-phospho-alpha-D-ribose 1-diphosphate: step 6/9. This is Imidazoleglycerol-phosphate dehydratase from Nitratidesulfovibrio vulgaris (strain DP4) (Desulfovibrio vulgaris).